The following is a 391-amino-acid chain: Phosphoglycerate kinase (391 aa).

Substrate contacts are provided by residues 21-23, Arg36, 59-62, Arg113, and Arg146; these read DLN and HLGR. Residues Lys197, Glu319, and 345 to 348 each bind ATP; that span reads GGDT.

It belongs to the phosphoglycerate kinase family. In terms of assembly, monomer.

The protein resides in the cytoplasm. It catalyses the reaction (2R)-3-phosphoglycerate + ATP = (2R)-3-phospho-glyceroyl phosphate + ADP. It functions in the pathway carbohydrate degradation; glycolysis; pyruvate from D-glyceraldehyde 3-phosphate: step 2/5. The polypeptide is Phosphoglycerate kinase (Pseudoalteromonas translucida (strain TAC 125)).